The sequence spans 208 residues: Large ribosomal subunit protein uL3 (208 aa).

The protein belongs to the universal ribosomal protein uL3 family. In terms of assembly, part of the 50S ribosomal subunit. Forms a cluster with proteins L14 and L19.

Its function is as follows. One of the primary rRNA binding proteins, it binds directly near the 3'-end of the 23S rRNA, where it nucleates assembly of the 50S subunit. The polypeptide is Large ribosomal subunit protein uL3 (Desulfosudis oleivorans (strain DSM 6200 / JCM 39069 / Hxd3) (Desulfococcus oleovorans)).